Here is a 113-residue protein sequence, read N- to C-terminus: Small ribosomal subunit protein bS6 (113 aa).

Belongs to the bacterial ribosomal protein bS6 family.

Binds together with bS18 to 16S ribosomal RNA. This chain is Small ribosomal subunit protein bS6, found in Flavobacterium johnsoniae (strain ATCC 17061 / DSM 2064 / JCM 8514 / BCRC 14874 / CCUG 350202 / NBRC 14942 / NCIMB 11054 / UW101) (Cytophaga johnsonae).